Here is a 156-residue protein sequence, read N- to C-terminus: Transcription antitermination protein NusB (156 aa).

The protein belongs to the NusB family.

Involved in transcription antitermination. Required for transcription of ribosomal RNA (rRNA) genes. Binds specifically to the boxA antiterminator sequence of the ribosomal RNA (rrn) operons. This is Transcription antitermination protein NusB from Rickettsia akari (strain Hartford).